A 234-amino-acid chain; its full sequence is Zinc finger FYVE domain-containing protein 21 (234 aa).

An FYVE-type zinc finger spans residues Asp44–Leu104. The Zn(2+) site is built by Cys50, Cys53, Cys66, Cys69, Cys74, Cys77, Cys96, and Cys99. The tract at residues Ala107–Gln234 is PH-like.

Interacts with PTK2/FAK1.

It is found in the cell junction. The protein resides in the focal adhesion. It localises to the cytoplasmic vesicle. Its subcellular location is the endosome. Its function is as follows. Plays a role in cell adhesion, and thereby in cell motility which requires repeated formation and disassembly of focal adhesions. Regulates microtubule-induced PTK2/FAK1 dephosphorylation, an event important for focal adhesion disassembly, as well as integrin beta-1/ITGB1 cell surface expression. The protein is Zinc finger FYVE domain-containing protein 21 (ZFYVE21) of Homo sapiens (Human).